The sequence spans 185 residues: Intraflagellar transport protein 22 homolog (185 aa).

Residues 10–17, 63–67, and 123–126 contribute to the GTP site; these read GPCESGKT, DCGGD, and HKPG. S137 carries the phosphoserine modification.

The protein belongs to the small GTPase superfamily. Rab family. In terms of assembly, component of the IFT complex B, at least composed of IFT20, IFT22, IFT25, IFT27, IFT46, IFT52, TRAF3IP1/IFT54, IFT57, IFT74, IFT80, IFT81, and IFT88. Interacts with IFT88. Interacts with CFAP61.

It localises to the cell projection. The protein resides in the cilium. Small GTPase-like component of the intraflagellar transport (IFT) complex B. The polypeptide is Intraflagellar transport protein 22 homolog (IFT22) (Macaca fascicularis (Crab-eating macaque)).